A 68-amino-acid polypeptide reads, in one-letter code: Alpha-conotoxin Lp1.1 (68 aa).

An N-terminal signal peptide occupies residues 1–21; it reads MGMRMMFIMFMLVVLATTVVT. The propeptide occupies 22–48; that stretch reads FTSDRALDAMNAAASNKASRLIALAVR. Cystine bridges form between C50-C56 and C51-C64. The tract at residues 52–54 is lacks the Ser-Xaa-Pro motif that is crucial for potent interaction with nAChR; that stretch reads ARA. A Glycine amide modification is found at G65. Positions 66-68 are excised as a propeptide; sequence GGR.

It belongs to the conotoxin A superfamily. Expressed by the venom duct.

The protein localises to the secreted. Alpha-conotoxins act on postsynaptic membranes, they bind to the nicotinic acetylcholine receptors (nAChR) and thus inhibit them. Synthetic peptide inhibits alpha-6/alpha-3/beta-2 and alpha-3/beta-2 nicotinic acetylcholine receptors and causes uncoordinated movement when intramuscularly injected into goldfish. Has a distinct nAChR binding mode from other alpha-conotoxins, due to a different three residue motif (Ala-Xaa-Ala instead of the conserved Ser-Xaa-Pro motif). In Conus leopardus (Leopard cone), this protein is Alpha-conotoxin Lp1.1.